Reading from the N-terminus, the 73-residue chain is Kappa-scoloptoxin SsmTx-I (73 aa).

Residues 1–25 (MMMMFSVVSVFLMLLLLKFHDLSMG) form the signal peptide. A propeptide spanning residues 26-37 (EEISLLKKVVRR) is cleaved from the precursor. 2 disulfide bridges follow: Cys45–Cys56 and Cys50–Cys63.

The protein belongs to the scoloptoxin-04 family. In terms of tissue distribution, expressed by the venom gland.

It is found in the secreted. Exhibits highly specific blockage of Kv2.1/KCNB1 (IC(50)=41.7 nM) voltage-gated potassium channels. This blockage is not associated with a significant change in steady-state activation, suggesting that this toxin acts as a channel blocker rather than a gating-modifier. Shows potential analgesic activities in formalin-induced paw licking, thermal pain, and acetic acid-induced abdominal writhing mice models. The protein is Kappa-scoloptoxin SsmTx-I of Scolopendra mutilans (Chinese red-headed centipede).